A 455-amino-acid chain; its full sequence is Bifunctional protein GlmU (455 aa).

Positions 1–227 (MKLKAIILAA…YEEIMAVNSR (227 aa)) are pyrophosphorylase. UDP-N-acetyl-alpha-D-glucosamine contacts are provided by residues 8-11 (LAAG), Lys22, Gln72, and 77-78 (GT). Asp100 lines the Mg(2+) pocket. UDP-N-acetyl-alpha-D-glucosamine is bound by residues Gly137, Glu152, Asn167, and Asn225. Asn225 is a Mg(2+) binding site. The linker stretch occupies residues 228–248 (EQLADVEAIMRRRIAKKHMAN). An N-acetyltransferase region spans residues 249 to 455 (GVTIMNPEHV…WTKRKGLLKK (207 aa)). The UDP-N-acetyl-alpha-D-glucosamine site is built by Arg330 and Lys348. The Proton acceptor role is filled by His360. Positions 363 and 374 each coordinate UDP-N-acetyl-alpha-D-glucosamine. Acetyl-CoA-binding positions include 383-384 (NY), Ser402, Cys420, and Arg437.

The protein in the N-terminal section; belongs to the N-acetylglucosamine-1-phosphate uridyltransferase family. In the C-terminal section; belongs to the transferase hexapeptide repeat family. In terms of assembly, homotrimer. Mg(2+) serves as cofactor.

Its subcellular location is the cytoplasm. It catalyses the reaction alpha-D-glucosamine 1-phosphate + acetyl-CoA = N-acetyl-alpha-D-glucosamine 1-phosphate + CoA + H(+). The enzyme catalyses N-acetyl-alpha-D-glucosamine 1-phosphate + UTP + H(+) = UDP-N-acetyl-alpha-D-glucosamine + diphosphate. It functions in the pathway nucleotide-sugar biosynthesis; UDP-N-acetyl-alpha-D-glucosamine biosynthesis; N-acetyl-alpha-D-glucosamine 1-phosphate from alpha-D-glucosamine 6-phosphate (route II): step 2/2. It participates in nucleotide-sugar biosynthesis; UDP-N-acetyl-alpha-D-glucosamine biosynthesis; UDP-N-acetyl-alpha-D-glucosamine from N-acetyl-alpha-D-glucosamine 1-phosphate: step 1/1. Its pathway is bacterial outer membrane biogenesis; LPS lipid A biosynthesis. Its function is as follows. Catalyzes the last two sequential reactions in the de novo biosynthetic pathway for UDP-N-acetylglucosamine (UDP-GlcNAc). The C-terminal domain catalyzes the transfer of acetyl group from acetyl coenzyme A to glucosamine-1-phosphate (GlcN-1-P) to produce N-acetylglucosamine-1-phosphate (GlcNAc-1-P), which is converted into UDP-GlcNAc by the transfer of uridine 5-monophosphate (from uridine 5-triphosphate), a reaction catalyzed by the N-terminal domain. The protein is Bifunctional protein GlmU of Alkaliphilus oremlandii (strain OhILAs) (Clostridium oremlandii (strain OhILAs)).